Consider the following 112-residue polypeptide: Cytochrome c (112 aa).

C23, C26, and H27 together coordinate heme c. An N6,N6,N6-trimethyllysine modification is found at K81. Residue M89 participates in heme c binding. N6,N6,N6-trimethyllysine is present on K95.

This sequence belongs to the cytochrome c family. Binds 1 heme c group covalently per subunit.

It localises to the mitochondrion intermembrane space. Its function is as follows. Electron carrier protein. The oxidized form of the cytochrome c heme group can accept an electron from the heme group of the cytochrome c1 subunit of cytochrome reductase. Cytochrome c then transfers this electron to the cytochrome oxidase complex, the final protein carrier in the mitochondrial electron-transport chain. This Arabidopsis thaliana (Mouse-ear cress) protein is Cytochrome c (CC-1).